The chain runs to 147 residues: uncharacterized protein (147 aa).

This sequence to M.pneumoniae MPN_465.

This is an uncharacterized protein from Mycoplasma pneumoniae (strain ATCC 29342 / M129 / Subtype 1) (Mycoplasmoides pneumoniae).